The following is a 453-amino-acid chain: tRNA modification GTPase MnmE (453 aa).

Positions 22, 79, and 119 each coordinate (6S)-5-formyl-5,6,7,8-tetrahydrofolate. The 162-residue stretch at 215 to 376 (GMKVVIAGRP…LQQHLKSLMG (162 aa)) folds into the TrmE-type G domain. Asn-225 lines the K(+) pocket. GTP is bound by residues 225 to 230 (NAGKSS), 244 to 250 (TEIAGTT), 269 to 272 (DTAG), and 334 to 337 (NKAD). Mg(2+) is bound at residue Ser-229. Positions 244, 246, and 249 each coordinate K(+). Thr-250 contributes to the Mg(2+) binding site. Residue Lys-453 participates in (6S)-5-formyl-5,6,7,8-tetrahydrofolate binding.

This sequence belongs to the TRAFAC class TrmE-Era-EngA-EngB-Septin-like GTPase superfamily. TrmE GTPase family. Homodimer. Heterotetramer of two MnmE and two MnmG subunits. Requires K(+) as cofactor.

The protein resides in the cytoplasm. Functionally, exhibits a very high intrinsic GTPase hydrolysis rate. Involved in the addition of a carboxymethylaminomethyl (cmnm) group at the wobble position (U34) of certain tRNAs, forming tRNA-cmnm(5)s(2)U34. The sequence is that of tRNA modification GTPase MnmE from Shewanella sediminis (strain HAW-EB3).